A 100-amino-acid chain; its full sequence is Small ribosomal subunit protein uS14c (100 aa).

It belongs to the universal ribosomal protein uS14 family. As to quaternary structure, part of the 30S ribosomal subunit.

The protein localises to the plastid. Functionally, binds 16S rRNA, required for the assembly of 30S particles. The protein is Small ribosomal subunit protein uS14c of Cuscuta obtusiflora (Peruvian dodder).